We begin with the raw amino-acid sequence, 119 residues long: ATP-dependent Clp protease adapter protein ClpS (119 aa).

Residues 1–33 form a disordered region; it reads MATRIPKTPSTPPAQKPAGDDGDSVVLERRPQK.

The protein belongs to the ClpS family. As to quaternary structure, binds to the N-terminal domain of the chaperone ClpA.

Functionally, involved in the modulation of the specificity of the ClpAP-mediated ATP-dependent protein degradation. The sequence is that of ATP-dependent Clp protease adapter protein ClpS from Variovorax paradoxus (strain S110).